The primary structure comprises 542 residues: GMP synthase [glutamine-hydrolyzing] (542 aa).

The Glutamine amidotransferase type-1 domain maps to 28 to 218; it reads MIVILDFGSQ…VYHICECEPT (191 aa). Residue C105 is the Nucleophile of the active site. Residues H192 and E194 contribute to the active site. The GMPS ATP-PPase domain occupies 219–417; that stretch reads WTTEAFVDET…IGLPEEIVRR (199 aa). 246 to 252 provides a ligand contact to ATP; the sequence is SGGVDSS.

In terms of assembly, homodimer.

The catalysed reaction is XMP + L-glutamine + ATP + H2O = GMP + L-glutamate + AMP + diphosphate + 2 H(+). It functions in the pathway purine metabolism; GMP biosynthesis; GMP from XMP (L-Gln route): step 1/1. Catalyzes the synthesis of GMP from XMP. The polypeptide is GMP synthase [glutamine-hydrolyzing] (Crocosphaera subtropica (strain ATCC 51142 / BH68) (Cyanothece sp. (strain ATCC 51142))).